Reading from the N-terminus, the 935-residue chain is C-1-tetrahydrofolate synthase, cytoplasmic (935 aa).

N-acetylmethionine is present on M1. Positions 2–291 (APAGILNGKL…MLMQSTVESA (290 aa)) are methylenetetrahydrofolate dehydrogenase and methenyltetrahydrofolate cyclohydrolase (D/C) domain. Substrate is bound by residues 52-56 (YINVK) and 99-101 (VQL). K56 is an active-site residue. Residues 172–174 (GRS) and S197 contribute to the NADP(+) site. 272 to 276 (PGGVG) contacts substrate. Residues 310–935 (LNLKTPVPSD…PETEQVNGLF (626 aa)) form a formyltetrahydrofolate synthetase domain region. Phosphoserine is present on S318. 380–387 (TPLGEGKS) contributes to the ATP binding site. Phosphoserine is present on residues S413 and S490.

This sequence in the N-terminal section; belongs to the tetrahydrofolate dehydrogenase/cyclohydrolase family. In the C-terminal section; belongs to the formate--tetrahydrofolate ligase family. In terms of assembly, homodimer.

Its subcellular location is the cytoplasm. It catalyses the reaction (6R)-5,10-methylene-5,6,7,8-tetrahydrofolate + NADP(+) = (6R)-5,10-methenyltetrahydrofolate + NADPH. The catalysed reaction is (6R)-5,10-methenyltetrahydrofolate + H2O = (6R)-10-formyltetrahydrofolate + H(+). It carries out the reaction (6S)-5,6,7,8-tetrahydrofolate + formate + ATP = (6R)-10-formyltetrahydrofolate + ADP + phosphate. Its pathway is one-carbon metabolism; tetrahydrofolate interconversion. Functionally, trifunctional enzyme that catalyzes the interconversion of three forms of one-carbon-substituted tetrahydrofolate: (6R)-5,10-methylene-5,6,7,8-tetrahydrofolate, 5,10-methenyltetrahydrofolate and (6S)-10-formyltetrahydrofolate. These derivatives of tetrahydrofolate are differentially required in nucleotide and amino acid biosynthesis, (6S)-10-formyltetrahydrofolate being required for purine biosynthesis while (6R)-5,10-methylene-5,6,7,8-tetrahydrofolate is used for serine and methionine biosynthesis for instance. This is C-1-tetrahydrofolate synthase, cytoplasmic (Mthfd1) from Mus musculus (Mouse).